Consider the following 341-residue polypeptide: Twinfilin-2 (341 aa).

ADF-H domains lie at 1-131 and 169-305; these read ATEE…KHLS and GLAF…DEVH. K6 is subject to N6-acetyllysine. Residue Y301 is modified to Phosphotyrosine. The interval 314–341 is disordered; the sequence is AFAKPKGPGGKRGHKRLIRGPGENGDDS. Residues 322–331 show a composition bias toward basic residues; it reads GGKRGHKRLI. S341 bears the Phosphoserine mark.

Belongs to the actin-binding proteins ADF family. Twinfilin subfamily. As to quaternary structure, interacts with G-actin; ADP-actin form and capping protein (CP). May also be able to interact with TWF1 and phosphoinositides, PI(4,5)P2. When bound to PI(4,5)P2, it is down-regulated. Interacts with MYO7A. Phosphorylated on both serine and threonine residues.

Its subcellular location is the cytoplasm. The protein resides in the cytoskeleton. It localises to the perinuclear region. It is found in the cell projection. The protein localises to the stereocilium. Its function is as follows. Actin-binding protein involved in motile and morphological processes. Inhibits actin polymerization, likely by sequestering G-actin. By capping the barbed ends of filaments, it also regulates motility. Seems to play an important role in clathrin-mediated endocytosis and distribution of endocytic organelles. May play a role in regulating the mature length of the middle and short rows of stereocilia. The sequence is that of Twinfilin-2 (TWF2) from Pongo abelii (Sumatran orangutan).